Consider the following 510-residue polypeptide: L-2,4-diaminobutyrate decarboxylase (510 aa).

The residue at position 319 (Lys319) is an N6-(pyridoxal phosphate)lysine.

It belongs to the group II decarboxylase family. It depends on pyridoxal 5'-phosphate as a cofactor.

The catalysed reaction is L-2,4-diaminobutanoate + H(+) = propane-1,3-diamine + CO2. It functions in the pathway amine and polyamine biosynthesis; 1,3-diaminopropane biosynthesis; 1,3-diaminopropane from L-aspartate 4-semialdehyde: step 2/2. This chain is L-2,4-diaminobutyrate decarboxylase (ddc), found in Acinetobacter baumannii.